The following is a 214-amino-acid chain: MRQHVNPLSQFFQLPLSLPSKNILFEKSHYPIHLDIGSAKGEFLIELATKYPDWNFVGLEIREPLVSLCEKKRRKLELTNLKFLFCNVNVSLDEWLSDLDFGQLKRVSIQFPDPWFKRKHFKRRVLNTNILNSIAKSMSKDGEIFIQSDILKLIEYMTNTIDENRYFTRKNVGDLRSIDKNPYDVMTDREIFSLKKNLLIYRVMYIRNSLLFTN.

S-adenosyl-L-methionine-binding residues include aspartate 35, glutamate 60, asparagine 87, and aspartate 113. The active site involves aspartate 113. Substrate contacts are provided by lysine 117 and aspartate 149.

This sequence belongs to the class I-like SAM-binding methyltransferase superfamily. TrmB family.

It carries out the reaction guanosine(46) in tRNA + S-adenosyl-L-methionine = N(7)-methylguanosine(46) in tRNA + S-adenosyl-L-homocysteine. The protein operates within tRNA modification; N(7)-methylguanine-tRNA biosynthesis. Its function is as follows. Catalyzes the formation of N(7)-methylguanine at position 46 (m7G46) in tRNA. The sequence is that of tRNA (guanine-N(7)-)-methyltransferase from Prochlorococcus marinus (strain NATL1A).